The primary structure comprises 219 residues: Orotate phosphoribosyltransferase (219 aa).

5-phospho-alpha-D-ribose 1-diphosphate is bound at residue Lys26. Residue Phe34 to Phe35 coordinates orotate. Residues Tyr72–Lys73, Arg98, Lys99, Lys102, His104, and Asp124–Ala132 each bind 5-phospho-alpha-D-ribose 1-diphosphate. Orotate is bound by residues Thr128 and Arg156.

It belongs to the purine/pyrimidine phosphoribosyltransferase family. PyrE subfamily. As to quaternary structure, homodimer. Mg(2+) is required as a cofactor.

The enzyme catalyses orotidine 5'-phosphate + diphosphate = orotate + 5-phospho-alpha-D-ribose 1-diphosphate. Its pathway is pyrimidine metabolism; UMP biosynthesis via de novo pathway; UMP from orotate: step 1/2. Its function is as follows. Catalyzes the transfer of a ribosyl phosphate group from 5-phosphoribose 1-diphosphate to orotate, leading to the formation of orotidine monophosphate (OMP). This Xylella fastidiosa (strain 9a5c) protein is Orotate phosphoribosyltransferase.